A 604-amino-acid polypeptide reads, in one-letter code: NADP-dependent malic enzyme, mitochondrial (604 aa).

A disordered region spans residues Ser-28–Gly-50. The Proton donor role is filled by Tyr-137. Arg-190 provides a ligand contact to NADP(+). Lys-208 functions as the Proton acceptor in the catalytic mechanism. Residues Glu-280, Asp-281, and Asp-304 each coordinate a divalent metal cation. An NADP(+)-binding site is contributed by Asp-304. The residue at position 371 (Ser-371) is a Phosphoserine. An NADP(+)-binding site is contributed by Asn-443.

This sequence belongs to the malic enzymes family. Requires Mg(2+) as cofactor. The cofactor is Mn(2+).

Its subcellular location is the mitochondrion matrix. The catalysed reaction is (S)-malate + NADP(+) = pyruvate + CO2 + NADPH. It carries out the reaction oxaloacetate + H(+) = pyruvate + CO2. The chain is NADP-dependent malic enzyme, mitochondrial (Me3) from Mus musculus (Mouse).